The chain runs to 429 residues: 3-phosphoshikimate 1-carboxyvinyltransferase (429 aa).

Positions 23, 24, and 28 each coordinate 3-phosphoshikimate. K23 is a binding site for phosphoenolpyruvate. Phosphoenolpyruvate-binding residues include G95 and R123. The 3-phosphoshikimate site is built by S168, Q170, D316, and K343. Residue Q170 coordinates phosphoenolpyruvate. The Proton acceptor role is filled by D316. Phosphoenolpyruvate contacts are provided by R347 and R389.

The protein belongs to the EPSP synthase family. Monomer.

It is found in the cytoplasm. It catalyses the reaction 3-phosphoshikimate + phosphoenolpyruvate = 5-O-(1-carboxyvinyl)-3-phosphoshikimate + phosphate. It participates in metabolic intermediate biosynthesis; chorismate biosynthesis; chorismate from D-erythrose 4-phosphate and phosphoenolpyruvate: step 6/7. Catalyzes the transfer of the enolpyruvyl moiety of phosphoenolpyruvate (PEP) to the 5-hydroxyl of shikimate-3-phosphate (S3P) to produce enolpyruvyl shikimate-3-phosphate and inorganic phosphate. The polypeptide is 3-phosphoshikimate 1-carboxyvinyltransferase (Bacillus thuringiensis (strain Al Hakam)).